The following is a 148-amino-acid chain: Nucleoside diphosphate kinase (148 aa).

ATP is bound by residues Lys-9, Phe-57, Arg-85, Thr-91, Arg-102, and Asn-112. Phosphothreonine is present on Thr-91. His-115 acts as the Pros-phosphohistidine intermediate in catalysis. Ser-122 is modified (phosphoserine).

Belongs to the NDK family. Homotetramer. It depends on Mg(2+) as a cofactor.

It is found in the cytoplasm. It catalyses the reaction a 2'-deoxyribonucleoside 5'-diphosphate + ATP = a 2'-deoxyribonucleoside 5'-triphosphate + ADP. It carries out the reaction a ribonucleoside 5'-diphosphate + ATP = a ribonucleoside 5'-triphosphate + ADP. Major role in the synthesis of nucleoside triphosphates other than ATP. The ATP gamma phosphate is transferred to the NDP beta phosphate via a ping-pong mechanism, using a phosphorylated active-site intermediate. The protein is Nucleoside diphosphate kinase of Bacillus licheniformis (strain ATCC 14580 / DSM 13 / JCM 2505 / CCUG 7422 / NBRC 12200 / NCIMB 9375 / NCTC 10341 / NRRL NRS-1264 / Gibson 46).